Consider the following 303-residue polypeptide: Probable 5-dehydro-4-deoxyglucarate dehydratase (303 aa).

Belongs to the DapA family.

The catalysed reaction is 5-dehydro-4-deoxy-D-glucarate + H(+) = 2,5-dioxopentanoate + CO2 + H2O. It functions in the pathway carbohydrate acid metabolism; D-glucarate degradation; 2,5-dioxopentanoate from D-glucarate: step 2/2. This is Probable 5-dehydro-4-deoxyglucarate dehydratase from Acinetobacter baumannii (strain SDF).